We begin with the raw amino-acid sequence, 388 residues long: Succinate--CoA ligase [ADP-forming] subunit beta (388 aa).

An ATP-grasp domain is found at 9–244 (KEIFRSMGVA…LEEEDPKEIE (236 aa)). Residues Lys-46, 53–55 (GRG), Glu-99, Cys-102, and Glu-107 contribute to the ATP site. 2 residues coordinate Mg(2+): Asn-199 and Asp-213. Residues Asn-264 and 321–323 (GIM) contribute to the substrate site.

It belongs to the succinate/malate CoA ligase beta subunit family. As to quaternary structure, heterotetramer of two alpha and two beta subunits. Mg(2+) is required as a cofactor.

The enzyme catalyses succinate + ATP + CoA = succinyl-CoA + ADP + phosphate. The catalysed reaction is GTP + succinate + CoA = succinyl-CoA + GDP + phosphate. It functions in the pathway carbohydrate metabolism; tricarboxylic acid cycle; succinate from succinyl-CoA (ligase route): step 1/1. In terms of biological role, succinyl-CoA synthetase functions in the citric acid cycle (TCA), coupling the hydrolysis of succinyl-CoA to the synthesis of either ATP or GTP and thus represents the only step of substrate-level phosphorylation in the TCA. The beta subunit provides nucleotide specificity of the enzyme and binds the substrate succinate, while the binding sites for coenzyme A and phosphate are found in the alpha subunit. This Staphylococcus aureus (strain Mu3 / ATCC 700698) protein is Succinate--CoA ligase [ADP-forming] subunit beta.